The primary structure comprises 224 residues: Probable C-&gt;U-editing enzyme APOBEC-2 (224 aa).

The tract at residues 1–25 (MAQKEEAAAAAEPASQNGEEVENLE) is disordered. Residues E60 and H98 each contribute to the Zn(2+) site. The CMP/dCMP-type deaminase domain occupies 64–169 (GRNKTFLCYV…PEIQAALRKL (106 aa)). Residue E100 is the Proton donor of the active site. Positions 128 and 131 each coordinate Zn(2+).

The protein belongs to the cytidine and deoxycytidylate deaminase family. In terms of assembly, homotetramer. Zn(2+) is required as a cofactor.

It carries out the reaction cytidine(6666) in apoB mRNA + H2O + H(+) = uridine(6666) in apoB mRNA + NH4(+). Probable C to U editing enzyme whose physiological substrate is not yet known. Does not display detectable apoB mRNA editing. Has a low intrinsic cytidine deaminase activity. May play a role in the epigenetic regulation of gene expression through the process of active DNA demethylation. This is Probable C-&gt;U-editing enzyme APOBEC-2 (APOBEC2) from Bos taurus (Bovine).